The sequence spans 140 residues: Lymphocyte antigen 6H (140 aa).

An N-terminal signal peptide occupies residues 1–25 (MLPAAMKGLGLVLLAALLCSSPAHG). A UPAR/Ly6 domain is found at 26–91 (LWCQDCTLTT…RHFFSDYLMG (66 aa)). 5 disulfide bridges follow: cysteine 28–cysteine 52, cysteine 31–cysteine 40, cysteine 45–cysteine 73, cysteine 77–cysteine 104, and cysteine 105–cysteine 110. An N-linked (GlcNAc...) asparagine glycan is attached at asparagine 36.

Its subcellular location is the cell membrane. The polypeptide is Lymphocyte antigen 6H (LY6H) (Bos taurus (Bovine)).